The chain runs to 370 residues: Queuine tRNA-ribosyltransferase (370 aa).

The Proton acceptor role is filled by D89. Residues 89–93, D143, and G214 each bind substrate; that span reads DSGGF. The interval 245–251 is RNA binding; it reads GVGKPED. D264 functions as the Nucleophile in the catalytic mechanism. Residues 269–273 form an RNA binding; important for wobble base 34 recognition region; that stretch reads TRNAR. 4 residues coordinate Zn(2+): C302, C304, C307, and H333.

This sequence belongs to the queuine tRNA-ribosyltransferase family. In terms of assembly, homodimer. Within each dimer, one monomer is responsible for RNA recognition and catalysis, while the other monomer binds to the replacement base PreQ1. Requires Zn(2+) as cofactor.

The enzyme catalyses 7-aminomethyl-7-carbaguanine + guanosine(34) in tRNA = 7-aminomethyl-7-carbaguanosine(34) in tRNA + guanine. Its pathway is tRNA modification; tRNA-queuosine biosynthesis. Functionally, catalyzes the base-exchange of a guanine (G) residue with the queuine precursor 7-aminomethyl-7-deazaguanine (PreQ1) at position 34 (anticodon wobble position) in tRNAs with GU(N) anticodons (tRNA-Asp, -Asn, -His and -Tyr). Catalysis occurs through a double-displacement mechanism. The nucleophile active site attacks the C1' of nucleotide 34 to detach the guanine base from the RNA, forming a covalent enzyme-RNA intermediate. The proton acceptor active site deprotonates the incoming PreQ1, allowing a nucleophilic attack on the C1' of the ribose to form the product. After dissociation, two additional enzymatic reactions on the tRNA convert PreQ1 to queuine (Q), resulting in the hypermodified nucleoside queuosine (7-(((4,5-cis-dihydroxy-2-cyclopenten-1-yl)amino)methyl)-7-deazaguanosine). In Buchnera aphidicola subsp. Acyrthosiphon pisum (strain APS) (Acyrthosiphon pisum symbiotic bacterium), this protein is Queuine tRNA-ribosyltransferase.